Consider the following 322-residue polypeptide: Acetyl-coenzyme A carboxylase carboxyl transferase subunit alpha 2 (322 aa).

The 258-residue stretch at 37 to 294 (EINRLSARSE…KRVLQESLRN (258 aa)) folds into the CoA carboxyltransferase C-terminal domain.

Belongs to the AccA family. As to quaternary structure, acetyl-CoA carboxylase is a heterohexamer composed of biotin carboxyl carrier protein (AccB), biotin carboxylase (AccC) and two subunits each of ACCase subunit alpha (AccA) and ACCase subunit beta (AccD).

The protein resides in the cytoplasm. The catalysed reaction is N(6)-carboxybiotinyl-L-lysyl-[protein] + acetyl-CoA = N(6)-biotinyl-L-lysyl-[protein] + malonyl-CoA. The protein operates within lipid metabolism; malonyl-CoA biosynthesis; malonyl-CoA from acetyl-CoA: step 1/1. Component of the acetyl coenzyme A carboxylase (ACC) complex. First, biotin carboxylase catalyzes the carboxylation of biotin on its carrier protein (BCCP) and then the CO(2) group is transferred by the carboxyltransferase to acetyl-CoA to form malonyl-CoA. In terms of biological role, confers resistance to the endogenous polyketide antibiotic thailandamide. Can replace the endogenous gene in S.typhimurium, conferring slow growth and resistance to thailandamide. Can also replace the endogenous gene in E.coli, conferring resistance to thailandamide. The chain is Acetyl-coenzyme A carboxylase carboxyl transferase subunit alpha 2 from Burkholderia thailandensis (strain ATCC 700388 / DSM 13276 / CCUG 48851 / CIP 106301 / E264).